The primary structure comprises 463 residues: Protein translocase subunit SecY (463 aa).

Residues 1–20 (MGFMDFLAKMGENLPAVSKP) are Cytoplasmic-facing. Residues 21 to 47 (KDKPTLTRKLLWTFIGLIVYLLMASIP) form a helical membrane-spanning segment. At 48 to 60 (LYGVTSSNSFLSN) the chain is on the extracellular side. An intramembrane region (helical) is located at residues 61 to 68 (FLAQQIIF). The chain crosses the membrane as a discontinuously helical span at residues 61–89 (FLAQQIIFASSQGTLAQLGIGPVITSGLI). An intramembrane segment occupies 69–80 (ASSQGTLAQLGI). The segment at residues 81-89 (GPVITSGLI) is an intramembrane region (helical). Residues 90–110 (MQILVGSKLINVDLTTQEGKS) lie on the Cytoplasmic side of the membrane. A helical membrane pass occupies residues 111–134 (KFTQAEKALALIFIIVESSLFGYV). Topologically, residues 135–142 (FTRATSNI) are extracellular. The helical transmembrane segment at 143 to 167 (LLPIIVVVQLIIASYIILLLDEMIQ) threads the bilayer. Residues 168–174 (KGWGLGS) lie on the Cytoplasmic side of the membrane. A helical transmembrane segment spans residues 175–193 (GVSLFIMAGIMKVIFWNMF). Residues 194–236 (GIVSVQSQNLPVGFFPLLVSYITSGRNLQEIVLNTSSTTPYQP) are Extracellular-facing. A helical membrane pass occupies residues 237–258 (DLIGLIATVGLTILIVYLVNTN). The Cytoplasmic segment spans residues 259–283 (IYIPVTTQRLRGIRTTVPLNFLYVS). The helical transmembrane segment at 284–305 (SIPVIFVSVLGADIQLFASLAN) threads the bilayer. Topologically, residues 306-341 (SISNSASGILTDIANAFFFPPQGVPHSVYALVVDPV) are extracellular. Residues 342–361 (GAAIYAAVFIVLSIVFGMLW) form a helical membrane-spanning segment. Over 362-404 (IDVAGLDPKTQAEQMIRSGIEIPGMRTNPRIIEGILSKYIYAL) the chain is Cytoplasmic. A helical membrane pass occupies residues 405-423 (GFFSSLIVGLIAVVATFLG). Topologically, residues 424-426 (TYG) are extracellular. A helical membrane pass occupies residues 427-441 (TGVGLLLAITIAMQY). Over 442–463 (YNLLAYERTLEMYPLLKRIVGE) the chain is Cytoplasmic.

This sequence belongs to the SecY/SEC61-alpha family. In terms of assembly, component of the Sec protein translocase complex. Heterotrimer consisting of alpha (SecY), beta (SecG) and gamma (SecE) subunits. The heterotrimers can form oligomers, although 1 heterotrimer is thought to be able to translocate proteins. Interacts with the ribosome. May interact with SecDF, and other proteins may be involved.

Its subcellular location is the cell membrane. The central subunit of the protein translocation channel SecYEG. Consists of two halves formed by TMs 1-5 and 6-10. These two domains form a lateral gate at the front which open onto the bilayer between TMs 2 and 7, and are clamped together by SecE at the back. The channel is closed by both a pore ring composed of hydrophobic SecY resides and a short helix (helix 2A) on the extracellular side of the membrane which forms a plug. The plug probably moves laterally to allow the channel to open. The ring and the pore may move independently. In Sulfolobus acidocaldarius (strain ATCC 33909 / DSM 639 / JCM 8929 / NBRC 15157 / NCIMB 11770), this protein is Protein translocase subunit SecY.